The sequence spans 366 residues: 3-isopropylmalate dehydrogenase (366 aa).

76–89 is an NAD(+) binding site; that stretch reads GPKWDHNPASLRPE. Substrate-binding residues include Arg96, Arg106, Arg134, and Asp222. Mg(2+) contacts are provided by Asp222, Asp246, and Asp250. 280-292 lines the NAD(+) pocket; sequence GSAPDIAGQGKAN.

Belongs to the isocitrate and isopropylmalate dehydrogenases family. LeuB type 1 subfamily. Homodimer. The cofactor is Mg(2+). Mn(2+) is required as a cofactor.

Its subcellular location is the cytoplasm. The catalysed reaction is (2R,3S)-3-isopropylmalate + NAD(+) = 4-methyl-2-oxopentanoate + CO2 + NADH. Its pathway is amino-acid biosynthesis; L-leucine biosynthesis; L-leucine from 3-methyl-2-oxobutanoate: step 3/4. In terms of biological role, catalyzes the oxidation of 3-carboxy-2-hydroxy-4-methylpentanoate (3-isopropylmalate) to 3-carboxy-4-methyl-2-oxopentanoate. The product decarboxylates to 4-methyl-2 oxopentanoate. In Heyndrickxia coagulans (Weizmannia coagulans), this protein is 3-isopropylmalate dehydrogenase (leuB).